The chain runs to 377 residues: Lactosylceramide 1,3-N-acetyl-beta-D-glucosaminyltransferase A (377 aa).

Residues 1–12 (MLISARRLRRCQ) lie on the Cytoplasmic side of the membrane. Residues 13–30 (FLQLLASCFVLSLMALLV) form a helical; Signal-anchor for type II membrane protein membrane-spanning segment. Topologically, residues 31–377 (QEDNSLISHV…DTYPCSAAWS (347 aa)) are lumenal. Asparagine 56, asparagine 167, and asparagine 275 each carry an N-linked (GlcNAc...) asparagine glycan.

This sequence belongs to the glycosyltransferase 31 family.

Its subcellular location is the golgi apparatus membrane. It catalyses the reaction a beta-D-Gal-(1-&gt;4)-beta-D-Glc-(1&lt;-&gt;1)-Cer(d18:1(4E)) + UDP-N-acetyl-alpha-D-glucosamine = a beta-D-GlcNAc-(1-&gt;3)-beta-D-Gal-(1-&gt;4)-beta-D-Glc-(1&lt;-&gt;1)-Cer(d18:1(4E)) + UDP + H(+). The catalysed reaction is a neolactoside nLc4Cer(d18:1(4E)) + UDP-N-acetyl-alpha-D-glucosamine = a neolactoside IV(3)-beta-GlcNAc-nLc4Cer(d18:1(4E)) + UDP + H(+). Its pathway is protein modification; protein glycosylation. Functionally, beta-1,3-N-acetylglucosaminyltransferase that plays a key role in the synthesis of lacto- or neolacto-series carbohydrate chains on glycolipids. The protein is Lactosylceramide 1,3-N-acetyl-beta-D-glucosaminyltransferase A (b3gnt5-a) of Xenopus laevis (African clawed frog).